The following is a 56-amino-acid chain: Alpha-conotoxin TxIA (56 aa).

The signal sequence occupies residues 1–16 (MFTVFLLVVLATAVVS). The propeptide occupies 17-39 (FTSDRASDDGKAAASDLITLTIK). 2 disulfides stabilise this stretch: Cys41–Cys47 and Cys42–Cys55. A ser-Xaa-Pro motif, crucial for potent interaction with nAChR region spans residues 43 to 45 (SRP). Pro45 and Pro46 each carry 4-hydroxyproline; partial. Cys55 is subject to Cysteine amide.

The protein belongs to the conotoxin A superfamily. In terms of processing, exists in 4 different forms, depending on hydroxylations. Tx1a-PP does not contain hydroxyproline, tx1a-OP has one hydroxyproline at position 45, tx1a-PO has one hydroxyproline at position 46, and tx1a-PP has two hydroxyprolines at positions 45 and 46. In terms of tissue distribution, expressed by the venom duct. Tx1a that containing 1 or 2 non-hydroxylated prolines are mostly present in part 5 of the venom duct (distal part near the pharynx), whereas tx1a-OO (with 2 hydroxyprolines) is mostly present in part 4 of the venom duct (follewed by part 3).

It localises to the secreted. Functionally, alpha-conotoxins act on postsynaptic membranes, they bind to the nicotinic acetylcholine receptors (nAChR) and thus inhibit them. This toxin inhibits rat alpha-3-beta-2/CHRNA3-CHRNB2 (IC(50)=3.5 nM), rat alpha-7/CHRNA7 (IC(50)=392 nM) nAChR, and the L.stagnalis soluble acetylcholine receptor (all tested without hydroxyproline). This chain is Alpha-conotoxin TxIA, found in Conus textile (Cloth-of-gold cone).